Here is a 105-residue protein sequence, read N- to C-terminus: Large ribosomal subunit protein uL24 (105 aa).

It belongs to the universal ribosomal protein uL24 family. Part of the 50S ribosomal subunit.

One of two assembly initiator proteins, it binds directly to the 5'-end of the 23S rRNA, where it nucleates assembly of the 50S subunit. In terms of biological role, one of the proteins that surrounds the polypeptide exit tunnel on the outside of the subunit. This chain is Large ribosomal subunit protein uL24, found in Mycobacterium avium (strain 104).